The chain runs to 147 residues: uncharacterized protein (147 aa).

One can recognise an HTH LytTR-type domain in the interval 44-147 (LVGYIDKEIH…LKSIKERLSI (104 aa)).

The protein resides in the cytoplasm. This is an uncharacterized protein from Staphylococcus aureus (strain MW2).